A 153-amino-acid chain; its full sequence is 3-hydroxyacyl-[acyl-carrier-protein] dehydratase FabZ (153 aa).

Histidine 54 is a catalytic residue.

Belongs to the thioester dehydratase family. FabZ subfamily.

It is found in the cytoplasm. It carries out the reaction a (3R)-hydroxyacyl-[ACP] = a (2E)-enoyl-[ACP] + H2O. Functionally, involved in unsaturated fatty acids biosynthesis. Catalyzes the dehydration of short chain beta-hydroxyacyl-ACPs and long chain saturated and unsaturated beta-hydroxyacyl-ACPs. The sequence is that of 3-hydroxyacyl-[acyl-carrier-protein] dehydratase FabZ from Shewanella denitrificans (strain OS217 / ATCC BAA-1090 / DSM 15013).